A 230-amino-acid polypeptide reads, in one-letter code: Broad specificity amino-acid racemase YgeA (230 aa).

Substrate-binding positions include M10, Q52, and 83–85 (TNT). Residue T83 is the Proton donor of the active site. Residue C197 is the Proton acceptor of the active site. 198–199 (TE) lines the substrate pocket.

The protein belongs to the aspartate/glutamate racemases family.

The enzyme catalyses an L-alpha-amino acid = a D-alpha-amino acid. It carries out the reaction L-homoserine = D-homoserine. Its function is as follows. Amino-acid racemase able to utilize a broad range of substrates. Highest activity is observed with L-homoserine and D-homoserine. Has tenfold lower activity against L-methionine, L-leucine, L-valine and L-histidine. Has low activity with L-norvaline, L-asparagine, D-methionine, L-aminobutyric acid, L-isoleucine, L-serine, L-norleucine, L-alanine, L-glutamine, LL-diaminopimelic acid and L-phenylalanine. Has no activity against ten L-amino acids (Thr, Glu, Asp, Arg, Lys, Tyr, Trp, Orn, Cit and Aad). D-amino acids might be used as components of peptidoglycan and/or be involved in peptidoglycan metabolism and remodeling. The sequence is that of Broad specificity amino-acid racemase YgeA (ygeA) from Escherichia coli (strain K12).